Consider the following 425-residue polypeptide: Serine--tRNA ligase (425 aa).

233 to 235 (TAE) lines the L-serine pocket. An ATP-binding site is contributed by 264-266 (RAE). Residue Glu287 coordinates L-serine. Position 351–354 (351–354 (EISS)) interacts with ATP. Position 387 (Ser387) interacts with L-serine.

The protein belongs to the class-II aminoacyl-tRNA synthetase family. Type-1 seryl-tRNA synthetase subfamily. As to quaternary structure, homodimer. The tRNA molecule binds across the dimer.

The protein resides in the cytoplasm. It carries out the reaction tRNA(Ser) + L-serine + ATP = L-seryl-tRNA(Ser) + AMP + diphosphate + H(+). The catalysed reaction is tRNA(Sec) + L-serine + ATP = L-seryl-tRNA(Sec) + AMP + diphosphate + H(+). It functions in the pathway aminoacyl-tRNA biosynthesis; selenocysteinyl-tRNA(Sec) biosynthesis; L-seryl-tRNA(Sec) from L-serine and tRNA(Sec): step 1/1. In terms of biological role, catalyzes the attachment of serine to tRNA(Ser). Is also able to aminoacylate tRNA(Sec) with serine, to form the misacylated tRNA L-seryl-tRNA(Sec), which will be further converted into selenocysteinyl-tRNA(Sec). This is Serine--tRNA ligase from Clostridium perfringens (strain SM101 / Type A).